Consider the following 485-residue polypeptide: Katanin p60 ATPase-containing subunit A1 (485 aa).

Residues 101 to 173 (HRSSPCVVRK…KNKAEAVETE (73 aa)) are disordered. The span at 141–173 (NGDKGKPQKSKEKKENPSKPKEDKNKAEAVETE) shows a compositional bias: basic and acidic residues. 244–251 (GPPGTGKT) contacts ATP.

The protein belongs to the AAA ATPase family. Katanin p60 subunit A1 subfamily. As to quaternary structure, can homooligomerize into hexameric rings, which may be promoted by interaction with microtubules. Interacts with katnb1, which may serve as a targeting subunit.

Its subcellular location is the cytoplasm. The protein resides in the cytoskeleton. It is found in the microtubule organizing center. The protein localises to the centrosome. It localises to the spindle pole. Its subcellular location is the spindle. It catalyses the reaction n ATP + n H2O + a microtubule = n ADP + n phosphate + (n+1) alpha/beta tubulin heterodimers.. ATPase activity is stimulated by microtubules, which promote homooligomerization. ATP-dependent microtubule severing is stimulated by interaction with katnb1. Catalytic subunit of a complex which severs microtubules in an ATP-dependent manner. Microtubule severing may promote rapid reorganization of cellular microtubule arrays and the release of microtubules from the centrosome following nucleation. The chain is Katanin p60 ATPase-containing subunit A1 (katna1) from Danio rerio (Zebrafish).